A 397-amino-acid polypeptide reads, in one-letter code: Acetate kinase 2 (397 aa).

Residue N10 participates in Mg(2+) binding. Position 17 (K17) interacts with ATP. Residue R90 coordinates substrate. D147 acts as the Proton donor/acceptor in catalysis. ATP-binding positions include 207 to 211 (HLGNG), 281 to 283 (DAR), and 329 to 333 (GIGEN). E385 is a binding site for Mg(2+).

This sequence belongs to the acetokinase family. As to quaternary structure, homodimer. Requires Mg(2+) as cofactor. Mn(2+) is required as a cofactor.

The protein localises to the cytoplasm. The enzyme catalyses acetate + ATP = acetyl phosphate + ADP. Its pathway is metabolic intermediate biosynthesis; acetyl-CoA biosynthesis; acetyl-CoA from acetate: step 1/2. Functionally, catalyzes the formation of acetyl phosphate from acetate and ATP. Can also catalyze the reverse reaction. The protein is Acetate kinase 2 of Vibrio parahaemolyticus serotype O3:K6 (strain RIMD 2210633).